A 147-amino-acid polypeptide reads, in one-letter code: Large ribosomal subunit protein uL15 (147 aa).

The disordered stretch occupies residues 1–62 (MKLHELKPAQ…GQQPLSRRMP (62 aa)). Composition is skewed to gly residues over residues 21–31 (RGIGSGTGKTS) and 42–52 (AGGGVRPGFEG).

The protein belongs to the universal ribosomal protein uL15 family. Part of the 50S ribosomal subunit.

Binds to the 23S rRNA. This is Large ribosomal subunit protein uL15 from Desulfitobacterium hafniense (strain DSM 10664 / DCB-2).